The chain runs to 234 residues: Protein spitz (234 aa).

The signal sequence occupies residues 1–28 (MHSTMSVQHGLVALVLIGCLAHPWHVEA). The Lumenal segment spans residues 29 to 143 (CSSRTVPKPR…RPRPMLEKAS (115 aa)). Residues 33–71 (TVPKPRSSISSSMSGTALPPTQAPVTSSTTMRTTTTTTP) are disordered. Positions 56–71 (PVTSSTTMRTTTTTTP) are enriched in low complexity. A glycan (N-linked (GlcNAc...) asparagine) is linked at Asn-74. The region spanning 78 to 122 (PTYKCPETFDAWYCLNDAHCFAVKIADLPVYSCECAIGFMGQRCE) is the EGF-like domain. Disulfide bonds link Cys-82–Cys-97, Cys-91–Cys-110, and Cys-112–Cys-121. Residues 144-164 (IASGAMCALVFMLFVCLAFYL) form a helical membrane-spanning segment. Topologically, residues 165–234 (RFEQRAAKKA…SFAIRRSNKL (70 aa)) are cytoplasmic.

Interacts with Star via the lumenal domain. Proteolytic processing by Rhomboid occurs in the Golgi. Cleavage takes place within the transmembrane domain close to residue 144 and the active growth factor is released. In terms of processing, N-glycosylated and O-glycosylated. Expressed throughout the embryo.

The protein resides in the cell membrane. It is found in the endoplasmic reticulum membrane. The protein localises to the golgi apparatus membrane. In terms of biological role, ligand for the EGF receptor (Gurken). Involved in a number of unrelated developmental choices, for example, dorsal-ventral axis formation, glial migration, sensory organ determination, and muscle development. It is required for photoreceptor determination. The sequence is that of Protein spitz (spi) from Drosophila melanogaster (Fruit fly).